Reading from the N-terminus, the 292-residue chain is Diaminopimelate epimerase (292 aa).

The substrate site is built by N13, Q46, and N66. The Proton donor role is filled by C75. Substrate-binding positions include G76–N77, N170, N203, and E221–R222. C230 (proton acceptor) is an active-site residue. Residue G231–T232 coordinates substrate.

Belongs to the diaminopimelate epimerase family. In terms of assembly, homodimer.

It localises to the cytoplasm. The enzyme catalyses (2S,6S)-2,6-diaminopimelate = meso-2,6-diaminopimelate. It functions in the pathway amino-acid biosynthesis; L-lysine biosynthesis via DAP pathway; DL-2,6-diaminopimelate from LL-2,6-diaminopimelate: step 1/1. Functionally, catalyzes the stereoinversion of LL-2,6-diaminopimelate (L,L-DAP) to meso-diaminopimelate (meso-DAP), a precursor of L-lysine and an essential component of the bacterial peptidoglycan. This chain is Diaminopimelate epimerase, found in Acidovorax ebreus (strain TPSY) (Diaphorobacter sp. (strain TPSY)).